A 79-amino-acid chain; its full sequence is Succinate dehydrogenase assembly factor 1, mitochondrial (79 aa).

This sequence belongs to the complex I LYR family. SDHAF1 subfamily. Interacts with sdh2 within an sdh1-sdh2 subcomplex.

The protein localises to the mitochondrion matrix. Its function is as follows. Plays an essential role in the assembly of succinate dehydrogenase (SDH), an enzyme complex (also referred to as respiratory complex II) that is a component of both the tricarboxylic acid (TCA) cycle and the mitochondrial electron transport chain, and which couples the oxidation of succinate to fumarate with the reduction of ubiquinone (coenzyme Q) to ubiquinol. Promotes maturation of the iron-sulfur protein subunit sdh2 of the SDH catalytic dimer, protecting it from the deleterious effects of oxidants. May act together with SDHAF3. This is Succinate dehydrogenase assembly factor 1, mitochondrial from Schizosaccharomyces pombe (strain 972 / ATCC 24843) (Fission yeast).